Reading from the N-terminus, the 126-residue chain is Probable glycine cleavage system H protein (126 aa).

The 83-residue stretch at 24–106 (VVRVGITDFA…FGDGWLLEVE (83 aa)) folds into the Lipoyl-binding domain. The residue at position 65 (Lys-65) is an N6-lipoyllysine.

The protein belongs to the GcvH family. In terms of assembly, the glycine cleavage system is composed of four proteins: P, T, L and H. The cofactor is (R)-lipoate.

In terms of biological role, the glycine cleavage system catalyzes the degradation of glycine. The H protein shuttles the methylamine group of glycine from the P protein to the T protein. In Natronomonas pharaonis (strain ATCC 35678 / DSM 2160 / CIP 103997 / JCM 8858 / NBRC 14720 / NCIMB 2260 / Gabara) (Halobacterium pharaonis), this protein is Probable glycine cleavage system H protein.